The chain runs to 203 residues: Vexin (203 aa).

The segment covering 59-70 (HRTDRRDGEGRW) has biased composition (basic and acidic residues). The tract at residues 59-101 (HRTDRRDGEGRWSGRFQNPRLQGPHPAKTPARPVGTSEPKSAN) is disordered.

The protein belongs to the vexin family.

It localises to the cell membrane. The protein resides in the nucleus. Functionally, required for neurogenesis in the neural plate and retina. Strongly cooperates with neural bHLH factors to promote neurogenesis. This Bos taurus (Bovine) protein is Vexin.